Reading from the N-terminus, the 321-residue chain is Tetraacyldisaccharide 4'-kinase (321 aa).

54 to 61 contributes to the ATP binding site; that stretch reads SVGGTGKT.

It belongs to the LpxK family.

It carries out the reaction a lipid A disaccharide + ATP = a lipid IVA + ADP + H(+). Its pathway is glycolipid biosynthesis; lipid IV(A) biosynthesis; lipid IV(A) from (3R)-3-hydroxytetradecanoyl-[acyl-carrier-protein] and UDP-N-acetyl-alpha-D-glucosamine: step 6/6. In terms of biological role, transfers the gamma-phosphate of ATP to the 4'-position of a tetraacyldisaccharide 1-phosphate intermediate (termed DS-1-P) to form tetraacyldisaccharide 1,4'-bis-phosphate (lipid IVA). The sequence is that of Tetraacyldisaccharide 4'-kinase from Rickettsia bellii (strain OSU 85-389).